Consider the following 303-residue polypeptide: Glycine--tRNA ligase alpha subunit (303 aa).

Belongs to the class-II aminoacyl-tRNA synthetase family. Tetramer of two alpha and two beta subunits.

Its subcellular location is the cytoplasm. The catalysed reaction is tRNA(Gly) + glycine + ATP = glycyl-tRNA(Gly) + AMP + diphosphate. This is Glycine--tRNA ligase alpha subunit from Bordetella pertussis (strain Tohama I / ATCC BAA-589 / NCTC 13251).